Reading from the N-terminus, the 215-residue chain is MAPLLGDNFPEIEVVTTHGRMKLPEAFKGKWFVLFSHPADFTPVCTTEFVAFQNRYDEFRKLNCELIGLSIDQVFSHIKWIEWIKEKLDIEIEFPVIADDTGRVAEMLGLIHPAKGTNTVRAVFIVDPEAVIRAVIYYPQELGRNMDEILRAVKALQVSDQNGVAMPANWPNNELVGDAVIIPPPISEAEAKERLEKAKAGDISCYDWWFCYKKI.

One can recognise a Thioredoxin domain in the interval 3 to 158 (PLLGDNFPEI…ILRAVKALQV (156 aa)). The Cysteine sulfenic acid (-SOH) intermediate role is filled by C45. R121 provides a ligand contact to substrate. An intrachain disulfide couples C205 to C211.

It belongs to the peroxiredoxin family. Prx6 subfamily. In terms of assembly, homodecamer. Pentamer of dimers that assemble into a ring structure.

Its subcellular location is the cytoplasm. It catalyses the reaction a hydroperoxide + [thioredoxin]-dithiol = an alcohol + [thioredoxin]-disulfide + H2O. Thiol-specific peroxidase that catalyzes the reduction of hydrogen peroxide and organic hydroperoxides to water and alcohols, respectively. Plays a role in cell protection against oxidative stress by detoxifying peroxides. This Archaeoglobus fulgidus (strain ATCC 49558 / DSM 4304 / JCM 9628 / NBRC 100126 / VC-16) protein is Peroxiredoxin.